A 405-amino-acid chain; its full sequence is Secreted aspartic protease 8 (405 aa).

Residues 1-23 (MVSIITFTKNVLVTLAFALLAQG) form the signal peptide. A propeptide spans 24 to 75 (LAIPEDIDKRAEKVVSLDFTVTRKPFNATAHGQHHQSQQQQQQQQQQPAQKR) (activation peptide). Positions 52 to 78 (TAHGQHHQSQQQQQQQQQQPAQKRGTV) are disordered. The span at 58-70 (HQSQQQQQQQQQQ) shows a compositional bias: low complexity. In terms of domain architecture, Peptidase A1 spans 89–392 (YAATITVGSN…DLDGNTISLA (304 aa)). Asp-107 is an active-site residue. 107–109 (DTG) is a pepstatin A binding site. A disulfide bridge connects residues Cys-122 and Cys-134. Residues 160-161 (ED) and 292-296 (DSGTT) each bind pepstatin A. Asp-292 is a catalytic residue. Cys-327 and Cys-358 are oxidised to a cystine.

The protein belongs to the peptidase A1 family. In terms of assembly, monomer.

The protein localises to the secreted. The catalysed reaction is Preferential cleavage at the carboxyl of hydrophobic amino acids, but fails to cleave 15-Leu-|-Tyr-16, 16-Tyr-|-Leu-17 and 24-Phe-|-Phe-25 of insulin B chain. Activates trypsinogen, and degrades keratin.. Its function is as follows. Secreted aspartic peptidases (SAPs) are a group of ten acidic hydrolases considered as key virulence factors. These enzymes supply the fungus with nutrient amino acids as well as are able to degrade the selected host's proteins involved in the immune defense. Moreover, acts toward human hemoglobin though limited proteolysis to generate a variety of antimicrobial hemocidins, enabling to compete with the other microorganisms of the same physiological niche using the microbicidal peptides generated from the host protein. Plays a key role in defense against host by cleaving histatin-5 (Hst 5), a peptide from human saliva that carries out fungicidal activity. The cleavage rate decreases in an order of SAP2 &gt; SAP9 &gt; SAP3 &gt; SAP7 &gt; SAP4 &gt; SAP1 &gt; SAP8. The hydrolysis of Hst 5 by SAP8 causes production of the DSHAKRHHGY, HHSHRGY and FHEKHHSHRGY peptides. This is Secreted aspartic protease 8 from Candida albicans (strain SC5314 / ATCC MYA-2876) (Yeast).